The sequence spans 264 residues: Galectin-3 (264 aa).

The segment at methionine 1–proline 105 is disordered. Alanine 2 carries the post-translational modification N-acetylalanine. At serine 6 the chain carries Phosphoserine; by CK1. 8 consecutive repeat copies span residues tyrosine 35–alanine 43, tyrosine 44–alanine 52, tyrosine 53–alanine 61, tyrosine 62–alanine 70, tyrosine 71–alanine 79, tyrosine 80–alanine 88, tyrosine 89–alanine 97, and phenylalanine 98–alanine 107. The interval tyrosine 35–glycine 114 is 9 X 9 AA tandem repeats of Y-P-G-X(3)-P-[GS]-A. Low complexity predominate over residues glycine 37 to glycine 46. Residues glutamine 47–threonine 75 show a composition bias toward pro residues. Positions alanine 76–proline 105 are enriched in low complexity. One copy of the 9; truncated repeat lies at tyrosine 108–glycine 114. One can recognise a Galectin domain in the interval tyrosine 132–alanine 262. Residue tryptophan 195 to glutamine 201 coordinates a beta-D-galactoside. Serine 202 is subject to Phosphoserine. The short motif at lysine 240 to threonine 255 is the Nuclear export signal element.

As to quaternary structure, probably forms homo- or heterodimers. Interacts with DMBT1. Interacts with CD6 and ALCAM. Forms a complex with the ITGA3, ITGB1 and CSPG4. Interacts with LGALS3BP, LYPD3, ZFTRAF1 and UACA. Interacts with TRIM16; this interaction mediates autophagy of damage endomembranes. Interacts with and inhibits by binding NCR3/NKp30. The highest levels are found in activated macrophages.

The protein localises to the cytoplasm. The protein resides in the nucleus. Its subcellular location is the secreted. In terms of biological role, galactose-specific lectin which binds IgE. May mediate with the alpha-3, beta-1 integrin the stimulation by CSPG4 of endothelial cells migration. Together with DMBT1, required for terminal differentiation of columnar epithelial cells during early embryogenesis. In the nucleus: acts as a pre-mRNA splicing factor. Involved in acute inflammatory responses including neutrophil activation and adhesion, chemoattraction of monocytes macrophages, opsonization of apoptotic neutrophils, and activation of mast cells. Together with TRIM16, coordinates the recognition of membrane damage with mobilization of the core autophagy regulators ATG16L1 and BECN1 in response to damaged endomembranes. When secreted, interacts with NK cell-activating receptor NCR3/NKp30 acting as an inhibitory ligand which antagonizes NK cell attack. In Mus musculus (Mouse), this protein is Galectin-3 (Lgals3).